A 287-amino-acid chain; its full sequence is Merozoite surface protein 2 (287 aa).

The signal sequence occupies residues 1 to 20 (MKVIKTLSIINFFIFVTFNI). Residues Asn-22 and Asn-36 are each glycosylated (N-linked (GlcNAc...) asparagine). Positions 42–248 (SMTESNPPTG…DSQKECTDGN (207 aa)) are disordered. Residues 44-213 (TESNPPTGAS…EQTESPELQS (170 aa)) form a polymorphic region region. The span at 54-112 (GSAGGSAGGSAGGSAGGSAGGSAGGSAGGSAGGSAGGSAGGSAGGSAGGSAGSGDGNGA) shows a compositional bias: gly residues. Repeat copies occupy residues 55–58 (SAGG), 59–62 (SAGG), 63–66 (SAGG), 67–70 (SAGG), 71–74 (SAGG), 75–78 (SAGG), 79–82 (SAGG), 83–86 (SAGG), 87–90 (SAGG), 91–94 (SAGG), 95–98 (SAGG), and 99–102 (SAGG). Residues 55 to 102 (SAGGSAGGSAGGSAGGSAGGSAGGSAGGSAGGSAGGSAGGSAGGSAGG) form a 12 X 4 AA tandem repeats of S-A-G-G region. Over residues 121-149 (SPSTPATTTTTTTTNDAEASTSTSSENPN) the composition is skewed to low complexity. 2 stretches are compositionally biased toward polar residues: residues 150-180 (HNNAETNQANKETQNNSNVQQDSQTKSNVPP) and 187-215 (KSPTAQPEQAENSAPTAEQTESPELQSAP). Asn-164 carries N-linked (GlcNAc...) asparagine glycosylation. Residue Asn-236 is glycosylated (N-linked (GlcNAc...) asparagine). A disulfide bridge links Cys-244 with Cys-252. N-linked (GlcNAc...) asparagine glycosylation is found at Asn-260 and Asn-261. The GPI-anchor amidated asparagine moiety is linked to residue Asn-261. Positions 262–287 (SSNIASINKFVVLISATLVLSFAIFI) are cleaved as a propeptide — removed in mature form.

Its subcellular location is the cell membrane. In terms of biological role, may play a role in the merozoite attachment to the erythrocyte. The protein is Merozoite surface protein 2 of Plasmodium falciparum (isolate FCR-3 / Gambia).